Reading from the N-terminus, the 518-residue chain is Zinc finger protein 776 (518 aa).

Positions 14 to 89 (VTFEDVAVNF…HWTGVCTKKV (76 aa)) constitute a KRAB domain. Residues lysine 171, lysine 196, lysine 220, and lysine 247 each participate in a glycyl lysine isopeptide (Lys-Gly) (interchain with G-Cter in SUMO2) cross-link. The C2H2-type 1; degenerate zinc finger occupies 208–230 (YICGESTIPFSNKHSLVLHQRLL). Residues 236–258 (YVCSDSGKFTSKSNSFNNHQGVR) form a C2H2-type 2; degenerate zinc finger. C2H2-type zinc fingers lie at residues 264–286 (YQCG…QRVH), 292–314 (YECG…QRVH), 320–342 (YECD…QRVH), 348–370 (YQCG…QRVH), 376–398 (FECT…QRVH), 404–426 (YECK…QRVH), and 432–454 (YECR…QQIH). A C2H2-type 10; degenerate zinc finger spans residues 460–482 (HECGECGKCFHQKGSLIRHQQIH). The C2H2-type 11 zinc-finger motif lies at 488–510 (HECGECGKCFRQKGNLIKHQRVH).

The protein belongs to the krueppel C2H2-type zinc-finger protein family.

The protein localises to the nucleus. In terms of biological role, may be involved in transcriptional regulation. The protein is Zinc finger protein 776 (ZNF776) of Homo sapiens (Human).